We begin with the raw amino-acid sequence, 276 residues long: DnaJ homolog subfamily C member 27-B (276 aa).

GTP is bound by residues 23 to 30 (GNAEVGKS), 71 to 75 (DMAGH), and 137 to 140 (NKID). In terms of domain architecture, J spans 220 to 276 (DSWDMLGVKPGATRDEVNKAYRKLAVLLHPDKCVAPGSEDAFKAVVNARTALLKNIK).

The protein belongs to the small GTPase superfamily. Rab family.

Its subcellular location is the nucleus. Functionally, GTPase possibly involved in regulation of the MEK/ERK pathway. This is DnaJ homolog subfamily C member 27-B (dnajc27-b) from Xenopus laevis (African clawed frog).